Reading from the N-terminus, the 301-residue chain is Aspartate carbamoyltransferase catalytic subunit (301 aa).

Arg-54 and Thr-55 together coordinate carbamoyl phosphate. Lys-82 is a binding site for L-aspartate. Carbamoyl phosphate-binding residues include Arg-104, His-132, and Gln-135. L-aspartate contacts are provided by Arg-165 and Arg-217. Positions 257 and 258 each coordinate carbamoyl phosphate.

The protein belongs to the aspartate/ornithine carbamoyltransferase superfamily. ATCase family. In terms of assembly, heterododecamer (2C3:3R2) of six catalytic PyrB chains organized as two trimers (C3), and six regulatory PyrI chains organized as three dimers (R2).

It catalyses the reaction carbamoyl phosphate + L-aspartate = N-carbamoyl-L-aspartate + phosphate + H(+). It functions in the pathway pyrimidine metabolism; UMP biosynthesis via de novo pathway; (S)-dihydroorotate from bicarbonate: step 2/3. In terms of biological role, catalyzes the condensation of carbamoyl phosphate and aspartate to form carbamoyl aspartate and inorganic phosphate, the committed step in the de novo pyrimidine nucleotide biosynthesis pathway. The sequence is that of Aspartate carbamoyltransferase catalytic subunit from Thermus aquaticus.